The sequence spans 137 residues: Small heat shock protein IbpA (137 aa).

In terms of domain architecture, sHSP spans 28–137 (SQSNGGYPPY…AKKPRRIEIN (110 aa)).

Belongs to the small heat shock protein (HSP20) family. As to quaternary structure, monomer. Forms homomultimers of about 100-150 subunits at optimal growth temperatures. Conformation changes to monomers at high temperatures or high ionic concentrations.

The protein resides in the cytoplasm. Associates with aggregated proteins, together with IbpB, to stabilize and protect them from irreversible denaturation and extensive proteolysis during heat shock and oxidative stress. Aggregated proteins bound to the IbpAB complex are more efficiently refolded and reactivated by the ATP-dependent chaperone systems ClpB and DnaK/DnaJ/GrpE. Its activity is ATP-independent. This chain is Small heat shock protein IbpA, found in Shigella sonnei (strain Ss046).